A 276-amino-acid chain; its full sequence is Cis-2,3-dihydrobiphenyl-2,3-diol dehydrogenase (276 aa).

Residue 9–33 coordinates NAD(+); sequence LVTGGGSGLGRAIVDRFVAEGARVA. A substrate-binding site is contributed by Ser142. Tyr155 (proton acceptor) is an active-site residue.

The protein belongs to the short-chain dehydrogenases/reductases (SDR) family.

The catalysed reaction is (2R,3S)-3-phenylcyclohexa-3,5-diene-1,2-diol + NAD(+) = biphenyl-2,3-diol + NADH + H(+). The protein operates within xenobiotic degradation; biphenyl degradation; 2-hydroxy-2,4-pentadienoate and benzoate from biphenyl: step 2/4. The protein is Cis-2,3-dihydrobiphenyl-2,3-diol dehydrogenase (bphB) of Pseudomonas sp. (strain KKS102).